Reading from the N-terminus, the 313-residue chain is Leucine zipper protein 4 (313 aa).

The tract at residues 1-119 (MASFRKLTLS…PLIEQEKCSD (119 aa)) is interaction with DDX39B/UAP56. 2 disordered regions span residues 1 to 238 (MASF…QGDL) and 290 to 313 (QSGR…TITT). The UAP56-binding motif (UBM); required for proper nuclear localization motif lies at 22-40 (KVNFLDMSLDDIIIYKELE). Positions 34 to 60 (IIYKELEGTNAEEEKNKRQNHSKKESP) are enriched in basic and acidic residues. Positions 51-80 (RQNHSKKESPSRQQSKAHRHRHRRGYSRCR) are arg-rich; required for RNA-binding. Residues 65–77 (SKAHRHRHRRGYS) show a composition bias toward basic residues. Over residues 81–92 (SNSEEGNHDKKP) the composition is skewed to basic and acidic residues. Over residues 126–141 (EKNQGQSEGNQHQSEG) the composition is skewed to polar residues. Residues 142–168 (NPDKSEESQGQPEENHHSERSRNHLER) show a composition bias toward basic and acidic residues. Residues 169-179 (SLSQSDRSQGQ) are compositionally biased toward polar residues. Residues 178-236 (GQLKRHHPQYERSHGQYKRSHGQSERSHGHSERSHGHSERSHGHSERSHGHSKRSRSQG) are RS-containing His-rich (RS-H); necessary for nuclear localization. Over residues 199-226 (GQSERSHGHSERSHGHSERSHGHSERSH) the composition is skewed to basic and acidic residues. Residue serine 234 is modified to Phosphoserine. A leucine-zipper; required for RNA-binding and for its relocalization to the cytoplasm during cell division region spans residues 238-287 (LVDTQSDLIATQRDLIATQKDLIATQRDLIATQRDLIVTQRDLVATERDL). Residues 241–313 (TQSDLIATQR…YSTGKNTITT (73 aa)) are interaction with NXF1. Residues 304 to 313 (YSTGKNTITT) show a composition bias toward polar residues.

As to quaternary structure, interacts with NXF1, NXF2, THOC1, THOC5, DDX39B/UAP56 and SRRT. In terms of tissue distribution, expressed specifically in testis. Also expressed in a wide variety of cancer types, but particularly high levels of expression observed in melanoma cells.

It localises to the nucleus. It is found in the cytoplasm. Export adapter involved in mRNA nuclear export in cancer cells. Binds and enhances the RNA-binding activity of the nuclear RNA export factor NXF1. Can restore mRNA export function in cells compromised by loss of mRNA export adapters. The polypeptide is Leucine zipper protein 4 (LUZP4) (Homo sapiens (Human)).